Here is a 351-residue protein sequence, read N- to C-terminus: tRNA-specific 2-thiouridylase MnmA 2 (351 aa).

ATP is bound by residues 13 to 20 (GMSGGTDS) and Phe39. The Nucleophile role is filled by Cys98. Residues Cys98 and Cys195 are joined by a disulfide bond. Gly122 is a binding site for ATP. The segment at 144-146 (KDQ) is interaction with tRNA. Residue Cys195 is the Cysteine persulfide intermediate of the active site. The interaction with tRNA stretch occupies residues 301 to 302 (RY).

The protein belongs to the MnmA/TRMU family.

Its subcellular location is the cytoplasm. The catalysed reaction is S-sulfanyl-L-cysteinyl-[protein] + uridine(34) in tRNA + AH2 + ATP = 2-thiouridine(34) in tRNA + L-cysteinyl-[protein] + A + AMP + diphosphate + H(+). In terms of biological role, catalyzes the 2-thiolation of uridine at the wobble position (U34) of tRNA, leading to the formation of s(2)U34. The polypeptide is tRNA-specific 2-thiouridylase MnmA 2 (Phocaeicola vulgatus (strain ATCC 8482 / DSM 1447 / JCM 5826 / CCUG 4940 / NBRC 14291 / NCTC 11154) (Bacteroides vulgatus)).